We begin with the raw amino-acid sequence, 271 residues long: Formamidopyrimidine-DNA glycosylase (271 aa).

Pro-2 (schiff-base intermediate with DNA) is an active-site residue. Glu-3 (proton donor) is an active-site residue. Residue Lys-58 is the Proton donor; for beta-elimination activity of the active site. DNA contacts are provided by His-91, Arg-110, and Arg-152. The segment at 237–271 (WVYGRTGQPCRKCGALVSKTRQGQRSSFFCAQCQK) adopts an FPG-type zinc-finger fold. Arg-261 functions as the Proton donor; for delta-elimination activity in the catalytic mechanism.

This sequence belongs to the FPG family. In terms of assembly, monomer. Zn(2+) is required as a cofactor.

The catalysed reaction is Hydrolysis of DNA containing ring-opened 7-methylguanine residues, releasing 2,6-diamino-4-hydroxy-5-(N-methyl)formamidopyrimidine.. The enzyme catalyses 2'-deoxyribonucleotide-(2'-deoxyribose 5'-phosphate)-2'-deoxyribonucleotide-DNA = a 3'-end 2'-deoxyribonucleotide-(2,3-dehydro-2,3-deoxyribose 5'-phosphate)-DNA + a 5'-end 5'-phospho-2'-deoxyribonucleoside-DNA + H(+). Functionally, involved in base excision repair of DNA damaged by oxidation or by mutagenic agents. Acts as a DNA glycosylase that recognizes and removes damaged bases. Has a preference for oxidized purines, such as 7,8-dihydro-8-oxoguanine (8-oxoG). Has AP (apurinic/apyrimidinic) lyase activity and introduces nicks in the DNA strand. Cleaves the DNA backbone by beta-delta elimination to generate a single-strand break at the site of the removed base with both 3'- and 5'-phosphates. This chain is Formamidopyrimidine-DNA glycosylase, found in Nitrosomonas eutropha (strain DSM 101675 / C91 / Nm57).